Reading from the N-terminus, the 93-residue chain is Exodeoxyribonuclease 7 small subunit (93 aa).

Residues 61-75 (IDDNGDEKVYEKQTD) show a composition bias toward basic and acidic residues. The interval 61–93 (IDDNGDEKVYEKQTDDPSNNGGGNRGFGSADEQ) is disordered.

This sequence belongs to the XseB family. In terms of assembly, heterooligomer composed of large and small subunits.

It is found in the cytoplasm. The enzyme catalyses Exonucleolytic cleavage in either 5'- to 3'- or 3'- to 5'-direction to yield nucleoside 5'-phosphates.. Bidirectionally degrades single-stranded DNA into large acid-insoluble oligonucleotides, which are then degraded further into small acid-soluble oligonucleotides. This chain is Exodeoxyribonuclease 7 small subunit, found in Limosilactobacillus reuteri (strain DSM 20016) (Lactobacillus reuteri).